The primary structure comprises 416 residues: MGVLRHVVCAMSGGVDSSVSALLLKRMGYHVTGVFMKNWDSQEEKGLCSSDRDCEDAYKVCKMLDIPFHEVSYVKEYWHEVFSNLLWEYERGRTPNPDIICNKHIKFKHFYQYAVNTLGADAMATGHYARTSQEDEEVFQQKLTEAPKSLFRDRFEIRKPVRLYQGADLLKDQTFFLSQISQDALRHTLFPLAGLTKGYVKKIAAEAGFQHVLKKKESMGICFIGKRDFENFILEYLEPRPGNFVSIEDGQIMGKHKGWFTLTLGQRARIGGRADAWFVVDKDVTTADVFVCPSTFHPALFRDTLQTDRFHWIAEEPPAELVHTQMMDCHFCFNNRMPLTPCTVTLNLDGSVWVMVKEPMRGMATGQFAVLYKGHECLGSGKIIRLGPTKFALQKDQSNTNCLHKDTNQQHPEPHS.

Residues 10–17 (AMSGGVDS) and Met-36 each bind ATP. The tract at residues 96 to 98 (NPD) is interaction with target base in tRNA. The Nucleophile role is filled by Cys-101. Cys-101 and Cys-222 are disulfide-bonded. Gly-126 is a binding site for ATP. Residues 171–173 (KDQ) are interaction with tRNA. Cys-222 acts as the Cysteine persulfide intermediate in catalysis. The segment at 334 to 335 (NN) is interaction with tRNA. The tract at residues 397 to 416 (QSNTNCLHKDTNQQHPEPHS) is disordered. Residues 403-416 (LHKDTNQQHPEPHS) show a composition bias toward basic and acidic residues.

This sequence belongs to the MnmA/TRMU family.

The protein localises to the mitochondrion. The catalysed reaction is 5-taurinomethyluridine(34) in tRNA + S-sulfanyl-L-cysteinyl-[protein] + AH2 + ATP = 5-taurinomethyl-2-thiouridine(34) in tRNA + L-cysteinyl-[protein] + A + AMP + diphosphate + H(+). Its function is as follows. Catalyzes the 2-thiolation of uridine at the wobble position (U34) of mitochondrial tRNA(Lys), tRNA(Glu) and tRNA(Gln). Required for the formation of 5-taurinomethyl-2-thiouridine (tm5s2U) of mitochondrial tRNA(Lys), tRNA(Glu), and tRNA(Gln) at the wobble position. ATP is required to activate the C2 atom of the wobble base. The protein is Mitochondrial tRNA-specific 2-thiouridylase 1 (trmu) of Danio rerio (Zebrafish).